The sequence spans 169 residues: uncharacterized protein (169 aa).

The protein resides in the mitochondrion. This is an uncharacterized protein from Marchantia polymorpha (Common liverwort).